A 353-amino-acid polypeptide reads, in one-letter code: Lactosylceramide 4-alpha-galactosyltransferase (353 aa).

At methionine 1–threonine 22 the chain is on the cytoplasmic side. A helical; Signal-anchor for type II membrane protein membrane pass occupies residues leucine 23–valine 43. The Lumenal segment spans residues glycine 44–leucine 353. The N-linked (GlcNAc...) asparagine glycan is linked to asparagine 121. The DXD motif motif lies at aspartate 192–aspartate 194. Asparagine 203 carries an N-linked (GlcNAc...) asparagine glycan.

Belongs to the glycosyltransferase 32 family.

The protein resides in the golgi apparatus membrane. The catalysed reaction is a beta-D-Gal-(1-&gt;4)-beta-D-Glc-(1&lt;-&gt;1)-Cer(d18:1(4E)) + UDP-alpha-D-galactose = a globoside Gb3Cer (d18:1(4E)) + UDP + H(+). It catalyses the reaction a beta-D-Gal-(1&lt;-&gt;1')-ceramide + UDP-alpha-D-galactose = alpha-D-Gal-(1-&gt;4)-beta-D-Gal-(1&lt;-&gt;1')-Cer + UDP + H(+). Its pathway is glycolipid biosynthesis. In terms of biological role, catalyzes the transfer of galactose from UDP-alpha-D-galactose to lactosylceramide/beta-D-galactosyl-(1-&gt;4)-beta-D-glucosyl-(1&lt;-&gt;1)-ceramide(d18:1(4E)) to produce globotriaosylceramide/globoside Gb3Cer (d18:1(4E)). Also able to transfer galactose to galactosylceramide/beta-D-Gal-(1&lt;-&gt;1')-Cer. Globoside Gb3Cer is a glycosphingolipid of the globo serie, one of the major types of neutral root structures of glycosphingolipids, that constitute a significant portion of mammalian cell membranes. The chain is Lactosylceramide 4-alpha-galactosyltransferase (A4GALT) from Pan troglodytes (Chimpanzee).